The following is a 677-amino-acid chain: MTQVAKKILVTCALPYANGSIHLGHMLEHIQADVWVRYQRMRGHEVNFICADDAHGTPIMLKAQQLGITPEQMIGEMSQEHQTDFAGFNISYDNYHSTHSEENRQLSELIYSRLKENGFIKNRTISQLYDPEKGMFLPDRFVKGTCPKCKSPDQYGDNCEVCGATYSPTELIEPKSVVSGATPVMRDSEHFFFDLPSFSEMLQAWTRSGALQEQVANKMQEWFESGLQQWDISRDAPYFGFEIPNAPGKYFYVWLDAPIGYMGSFKNLCDKRGDSVSFDKYWKKDSTAELYHFIGKDIVYFHSLFWPAMLEGSNFRKPTNLFVHGYVTVNGAKMSKSRGTFIKASTWLNHFDADSLRYYYTAKLSSRIDDIDLNLEDFVQRVNADIVNKVVNLASRNAGFINKRFDGVLASELADPQLYKTFTDAAEVIGEAWESREFGKAIREIMALADLANRYVDEQAPWVVAKQEGRDADLQAICSMGINLFRVLMTYLKPVLPKLTERAEAFLNTELTWDGIQQPLLGHKVNPFKALYNRIDMKQVEALVEASKEEVKATAAPVTGPLADDPIQETITFDDFAKVDLRVALIENAEFVEGSDKLLRLTLDLGGEKRNVFSGIRSAYPDPQALIGRHTIMVANLAPRKMRFGISEGMVMAAGPGGKDIFLLSPDAGAKPGHQVK.

The short motif at 15–25 is the 'HIGH' region element; sequence PYANGSIHLGH. Cysteine 146, cysteine 149, cysteine 159, and cysteine 162 together coordinate Zn(2+). The short motif at 333–337 is the 'KMSKS' region element; that stretch reads KMSKS. Lysine 336 contacts ATP. Residues 575–677 form the tRNA-binding domain; that stretch reads DFAKVDLRVA…AGAKPGHQVK (103 aa).

Belongs to the class-I aminoacyl-tRNA synthetase family. MetG type 1 subfamily. As to quaternary structure, homodimer. Zn(2+) serves as cofactor.

The protein resides in the cytoplasm. It catalyses the reaction tRNA(Met) + L-methionine + ATP = L-methionyl-tRNA(Met) + AMP + diphosphate. In terms of biological role, is required not only for elongation of protein synthesis but also for the initiation of all mRNA translation through initiator tRNA(fMet) aminoacylation. The polypeptide is Methionine--tRNA ligase (Escherichia coli (strain UTI89 / UPEC)).